A 191-amino-acid chain; its full sequence is UPF0302 protein SA1295 (191 aa).

It belongs to the UPF0302 family.

The sequence is that of UPF0302 protein SA1295 from Staphylococcus aureus (strain N315).